The primary structure comprises 218 residues: Thiopurine S-methyltransferase (218 aa).

Residues Trp10, Leu45, Glu66, and Arg123 each coordinate S-adenosyl-L-methionine.

This sequence belongs to the class I-like SAM-binding methyltransferase superfamily. TPMT family.

It localises to the cytoplasm. The enzyme catalyses S-adenosyl-L-methionine + a thiopurine = S-adenosyl-L-homocysteine + a thiopurine S-methylether.. In Shewanella baltica (strain OS185), this protein is Thiopurine S-methyltransferase.